The following is a 346-amino-acid chain: tRNA N6-adenosine threonylcarbamoyltransferase (346 aa).

His111 and His115 together coordinate Fe cation. Residues 134-138 (LVSGG), Asp167, Gly180, and Asn279 contribute to the substrate site. Asp307 is a binding site for Fe cation.

Belongs to the KAE1 / TsaD family. Requires Fe(2+) as cofactor.

It localises to the cytoplasm. It catalyses the reaction L-threonylcarbamoyladenylate + adenosine(37) in tRNA = N(6)-L-threonylcarbamoyladenosine(37) in tRNA + AMP + H(+). In terms of biological role, required for the formation of a threonylcarbamoyl group on adenosine at position 37 (t(6)A37) in tRNAs that read codons beginning with adenine. Is involved in the transfer of the threonylcarbamoyl moiety of threonylcarbamoyl-AMP (TC-AMP) to the N6 group of A37, together with TsaE and TsaB. TsaD likely plays a direct catalytic role in this reaction. In Burkholderia ambifaria (strain MC40-6), this protein is tRNA N6-adenosine threonylcarbamoyltransferase.